The sequence spans 302 residues: MNTPNINQIKSFFLSLQDEICQQLEQIDGKEKFTEQCWQREEGGGGRSRIMKEGTIFEQAGANFSHVSGDMLPLSATAHRPELVGRHYQAMGVSLVIHPLNPYIPTSHANVRFFIAEKEGEAPVWWFGGGFDLTPYYGFKEDAIHWHTTARNICRPYGEDVYPKYKEWCDNYFYIKHRNEARGIGGLFYDDLNTPDFEHCFNFTQDIGKGFLSAYLPIVEKRKEILWGERERQFQLYRRGRYVEFNLVWDRGTLFGLQSGGRTESILMSMPPLARWEHDYHPEPESAEAALYTDFLPAKNWI.

Residue Ser94 participates in substrate binding. A divalent metal cation-binding residues include His98 and His108. His108 serves as the catalytic Proton donor. Substrate is bound at residue 110–112 (NVR). His147 and His177 together coordinate a divalent metal cation. Positions 242–277 (YVEFNLVWDRGTLFGLQSGGRTESILMSMPPLARWE) are important for dimerization. 260–262 (GGR) serves as a coordination point for substrate.

The protein belongs to the aerobic coproporphyrinogen-III oxidase family. As to quaternary structure, homodimer. A divalent metal cation serves as cofactor.

The protein localises to the cytoplasm. The catalysed reaction is coproporphyrinogen III + O2 + 2 H(+) = protoporphyrinogen IX + 2 CO2 + 2 H2O. Its pathway is porphyrin-containing compound metabolism; protoporphyrin-IX biosynthesis; protoporphyrinogen-IX from coproporphyrinogen-III (O2 route): step 1/1. Involved in the heme biosynthesis. Catalyzes the aerobic oxidative decarboxylation of propionate groups of rings A and B of coproporphyrinogen-III to yield the vinyl groups in protoporphyrinogen-IX. This Photorhabdus laumondii subsp. laumondii (strain DSM 15139 / CIP 105565 / TT01) (Photorhabdus luminescens subsp. laumondii) protein is Oxygen-dependent coproporphyrinogen-III oxidase.